The following is a 212-amino-acid chain: Acyl-homoserine-lactone synthase (212 aa).

The protein belongs to the autoinducer synthase family.

It catalyses the reaction a fatty acyl-[ACP] + S-adenosyl-L-methionine = an N-acyl-L-homoserine lactone + S-methyl-5'-thioadenosine + holo-[ACP] + H(+). In terms of biological role, required for the synthesis of OHHL (N-(3-oxohexanoyl)-L-homoserine lactone), an autoinducer molecule which binds to the EchR transcriptional regulator. This Dickeya chrysanthemi (Pectobacterium chrysanthemi) protein is Acyl-homoserine-lactone synthase (echI).